The following is a 133-amino-acid chain: Putative N-acetylgalactosamine permease IIC component 2 (133 aa).

Topologically, residues 1–2 are cytoplasmic; that stretch reads ME. A PTS EIIC type-4 domain is found at 1-133; that stretch reads MEISLLQAFA…CDLATNPRRI (133 aa). The chain crosses the membrane as a helical span at residues 3 to 23; sequence ISLLQAFALGIIAFIAGLDMF. Residues 24-32 are Periplasmic-facing; the sequence is NGLTHMHRP. The helical transmembrane segment at 33–53 threads the bilayer; that stretch reads VVLGPLVGLVLGDLHTGILTG. Topologically, residues 54 to 65 are cytoplasmic; it reads GTLELVWMGLAP. A helical transmembrane segment spans residues 66 to 86; sequence LAGAQPPNVIIGTIVGTAFAI. Topologically, residues 87 to 93 are periplasmic; the sequence is TTGVKPD. Residues 94–114 form a helical membrane-spanning segment; sequence VAVGVAVPFAVAVQMGITFLF. The Cytoplasmic portion of the chain corresponds to 115–133; it reads SVMSGVMSRCDLATNPRRI.

The protein resides in the cell inner membrane. Its function is as follows. The phosphoenolpyruvate-dependent sugar phosphotransferase system (PTS), a major carbohydrate active -transport system, catalyzes the phosphorylation of incoming sugar substrates concomitant with their translocation across the cell membrane. This system is involved in N-acetylgalactosamine transport. This Escherichia coli (strain K12) protein is Putative N-acetylgalactosamine permease IIC component 2 (agaW).